We begin with the raw amino-acid sequence, 124 residues long: V-type proton ATPase subunit F (124 aa).

Belongs to the V-ATPase F subunit family. As to quaternary structure, V-ATPase is a heteromultimeric enzyme composed of a peripheral catalytic V1 complex (components A to H) attached to an integral membrane V0 proton pore complex (components: a, c, c', c'', d, e, f and VOA1).

The protein localises to the vacuole membrane. Functionally, subunit of the V1 complex of vacuolar(H+)-ATPase (V-ATPase), a multisubunit enzyme composed of a peripheral complex (V1) that hydrolyzes ATP and a membrane integral complex (V0) that translocates protons. V-ATPase is responsible for acidifying and maintaining the pH of intracellular compartments. This Neurospora crassa (strain ATCC 24698 / 74-OR23-1A / CBS 708.71 / DSM 1257 / FGSC 987) protein is V-type proton ATPase subunit F (vma-7).